The following is a 205-amino-acid chain: Ras-related protein rab-6.1 (205 aa).

GTP is bound by residues 18–25 (GEQSVGKT), threonine 43, 66–70 (DTAGQ), and 124–127 (NKTD). Residues cysteine 203 and cysteine 205 are each lipidated (S-geranylgeranyl cysteine). Cysteine 205 is subject to Cysteine methyl ester.

The protein belongs to the small GTPase superfamily. Rab family. In terms of assembly, interacts with GARP complex component vps-52. Highly expressed in body wall muscle, intestine, somatic gonad, distal tip cells, vulva, and neurons including AVB, AVD, RIG, and PVC (at protein level). Not expressed in AVA and RMDV neurons.

It localises to the cell membrane. It is found in the cell projection. The protein resides in the dendrite. Its subcellular location is the perikaryon. The protein localises to the golgi apparatus. It localises to the cytoplasmic vesicle. It is found in the secretory vesicle. The small GTPases Rab are key regulators of intracellular membrane trafficking, from the formation of transport vesicles to their fusion with membranes. Rabs cycle between an inactive GDP-bound form and an active GTP-bound form that is able to recruit to membranes different set of downstream effectors directly responsible for vesicle formation, movement, tethering and fusion. In its active GTP-bound form, acts redundantly with rab-6.2 (in its active GTP-bound form) to positively regulate the retrograde trafficking of cargo molecules from endosomes to Golgi structures. Required for the retrograde trafficking of glr-1, a subunit of AMPA-type glutamate receptors (AMPRs), out of early endosomes and into the Golgi compartment in neurons. Together with rab-6.2, promotes the retrograde trafficking of mig-14 from endosomes to Golgi structures in the intestine. In oocytes, in its active GTP-bound form, involved in the membrane fusion and exocytosis of secretory vesicles (cortical granules) to play a role in the remodeling of the embryo surface following fertilization. Recruits sep-1 to cortical granules (derived from the Golgi complex) for exocytosis during the oocyte-to-embryo transition. Required for seam cell division and alae formation. Promotes spontaneous reversals in locomotion. In Caenorhabditis elegans, this protein is Ras-related protein rab-6.1.